A 385-amino-acid polypeptide reads, in one-letter code: Pectate lyase E (385 aa).

The N-terminal stretch at 1–30 (MKNTRVRSIGTKSLLAAVVTAALMATSAYA) is a signal peptide. Residue Asp164 participates in Ca(2+) binding. Repeat 1 spans residues 177-182 (DHVTIS). A 2 X 6 AA approximate repeats region spans residues 177–218 (DHVTISDGSFTDDKYTTKDGEKYVQHDGALDIKKGSDYVTIS). Residue Asp207 coordinates Ca(2+). Residues 213-218 (DYVTIS) form repeat 2. The active site involves Arg260.

It belongs to the polysaccharide lyase 1 family. PLBC subfamily. The cofactor is Ca(2+).

Its subcellular location is the secreted. It carries out the reaction Eliminative cleavage of (1-&gt;4)-alpha-D-galacturonan to give oligosaccharides with 4-deoxy-alpha-D-galact-4-enuronosyl groups at their non-reducing ends.. It participates in glycan metabolism; pectin degradation; 2-dehydro-3-deoxy-D-gluconate from pectin: step 2/5. Involved in maceration and soft-rotting of plant tissue. The sequence is that of Pectate lyase E (pelE) from Dickeya chrysanthemi (Pectobacterium chrysanthemi).